The primary structure comprises 227 residues: MTHPLQLGFQDATSPIMEELLHFHDHTLMIVFLISSLVLYIITLMLTTKLTHTSTMDAQEVETVWTILPAIILILIALPSLRILYMMDEINNPLLTVKTMGHQWYWSYEYTDYEDLNFDSYMVPTTDLKPGELRLLEVDNRVVLPMEVPIRMLISSEDVLHSWAVPSLGLKTDAIPGRLNQTTLTSTRPGLYYGQCSEICGSNHSFMPIVLELVPLKYFEDWSVSMT.

Residues 1–14 (MTHPLQLGFQDATS) lie on the Mitochondrial intermembrane side of the membrane. Residues 15-45 (PIMEELLHFHDHTLMIVFLISSLVLYIITLM) traverse the membrane as a helical segment. Residues 46 to 59 (LTTKLTHTSTMDAQ) lie on the Mitochondrial matrix side of the membrane. Residues 60–87 (EVETVWTILPAIILILIALPSLRILYMM) form a helical membrane-spanning segment. The Mitochondrial intermembrane segment spans residues 88 to 227 (DEINNPLLTV…YFEDWSVSMT (140 aa)). The Cu cation site is built by H161, C196, E198, C200, H204, and M207. E198 serves as a coordination point for Mg(2+). Y218 carries the phosphotyrosine modification.

Belongs to the cytochrome c oxidase subunit 2 family. Component of the cytochrome c oxidase (complex IV, CIV), a multisubunit enzyme composed of 14 subunits. The complex is composed of a catalytic core of 3 subunits MT-CO1, MT-CO2 and MT-CO3, encoded in the mitochondrial DNA, and 11 supernumerary subunits COX4I, COX5A, COX5B, COX6A, COX6B, COX6C, COX7A, COX7B, COX7C, COX8 and NDUFA4, which are encoded in the nuclear genome. The complex exists as a monomer or a dimer and forms supercomplexes (SCs) in the inner mitochondrial membrane with NADH-ubiquinone oxidoreductase (complex I, CI) and ubiquinol-cytochrome c oxidoreductase (cytochrome b-c1 complex, complex III, CIII), resulting in different assemblies (supercomplex SCI(1)III(2)IV(1) and megacomplex MCI(2)III(2)IV(2)). Found in a complex with TMEM177, COA6, COX18, COX20, SCO1 and SCO2. Interacts with TMEM177 in a COX20-dependent manner. Interacts with COX20. Interacts with COX16. It depends on Cu cation as a cofactor.

The protein resides in the mitochondrion inner membrane. The enzyme catalyses 4 Fe(II)-[cytochrome c] + O2 + 8 H(+)(in) = 4 Fe(III)-[cytochrome c] + 2 H2O + 4 H(+)(out). In terms of biological role, component of the cytochrome c oxidase, the last enzyme in the mitochondrial electron transport chain which drives oxidative phosphorylation. The respiratory chain contains 3 multisubunit complexes succinate dehydrogenase (complex II, CII), ubiquinol-cytochrome c oxidoreductase (cytochrome b-c1 complex, complex III, CIII) and cytochrome c oxidase (complex IV, CIV), that cooperate to transfer electrons derived from NADH and succinate to molecular oxygen, creating an electrochemical gradient over the inner membrane that drives transmembrane transport and the ATP synthase. Cytochrome c oxidase is the component of the respiratory chain that catalyzes the reduction of oxygen to water. Electrons originating from reduced cytochrome c in the intermembrane space (IMS) are transferred via the dinuclear copper A center (CU(A)) of subunit 2 and heme A of subunit 1 to the active site in subunit 1, a binuclear center (BNC) formed by heme A3 and copper B (CU(B)). The BNC reduces molecular oxygen to 2 water molecules using 4 electrons from cytochrome c in the IMS and 4 protons from the mitochondrial matrix. The chain is Cytochrome c oxidase subunit 2 (MT-CO2) from Carlito syrichta (Philippine tarsier).